The primary structure comprises 345 residues: GMP reductase 1 (345 aa).

Residue S26–R27 coordinates NADP(+). At S28 the chain carries Phosphoserine. NADP(+) contacts are provided by residues K78, D129 to A131, and V180 to G181. 3 residues coordinate K(+): G181, G183, and C186. The active-site Thioimidate intermediate is C186. Catalysis depends on T188, which acts as the Proton donor/acceptor. R189 serves as a coordination point for K(+). GMP-binding positions include D219–G221, G242–G243, G268–S270, and R286–G290. NADP(+)-binding positions include M269, Y285–R286, and S314–T317.

This sequence belongs to the IMPDH/GMPR family. GuaC type 1 subfamily. As to quaternary structure, homotetramer.

It carries out the reaction IMP + NH4(+) + NADP(+) = GMP + NADPH + 2 H(+). In terms of biological role, catalyzes the irreversible NADPH-dependent deamination of GMP to IMP. It functions in the conversion of nucleobase, nucleoside and nucleotide derivatives of G to A nucleotides, and in maintaining the intracellular balance of A and G nucleotides. This is GMP reductase 1 (Gmpr) from Mus musculus (Mouse).